A 138-amino-acid polypeptide reads, in one-letter code: Small ribosomal subunit protein bS16 (138 aa).

Residues 92-138 (QAAKREADAKQAAKEAAEAKAAAEAEAKAAAEAESADAGAEEAPAEA) form a disordered region. Positions 94 to 122 (AKREADAKQAAKEAAEAKAAAEAEAKAAA) are enriched in basic and acidic residues.

This sequence belongs to the bacterial ribosomal protein bS16 family.

The sequence is that of Small ribosomal subunit protein bS16 from Synechococcus sp. (strain WH7803).